The following is a 239-amino-acid chain: Ribonuclease P protein component 3 (239 aa).

The protein belongs to the eukaryotic/archaeal RNase P protein component 3 family. As to quaternary structure, consists of a catalytic RNA component and at least 4-5 protein subunits.

Its subcellular location is the cytoplasm. It catalyses the reaction Endonucleolytic cleavage of RNA, removing 5'-extranucleotides from tRNA precursor.. Functionally, part of ribonuclease P, a protein complex that generates mature tRNA molecules by cleaving their 5'-ends. This chain is Ribonuclease P protein component 3, found in Methanosarcina mazei (strain ATCC BAA-159 / DSM 3647 / Goe1 / Go1 / JCM 11833 / OCM 88) (Methanosarcina frisia).